We begin with the raw amino-acid sequence, 1191 residues long: DNA-directed RNA polymerase subunit beta (1191 aa).

Positions 1164–1191 (EEEDLQPADALNIAPQPDTEEEPVESFE) are disordered. The span at 1181–1191 (DTEEEPVESFE) shows a compositional bias: acidic residues.

Belongs to the RNA polymerase beta chain family. In terms of assembly, the RNAP catalytic core consists of 2 alpha, 1 beta, 1 beta' and 1 omega subunit. When a sigma factor is associated with the core the holoenzyme is formed, which can initiate transcription.

The enzyme catalyses RNA(n) + a ribonucleoside 5'-triphosphate = RNA(n+1) + diphosphate. Its function is as follows. DNA-dependent RNA polymerase catalyzes the transcription of DNA into RNA using the four ribonucleoside triphosphates as substrates. This chain is DNA-directed RNA polymerase subunit beta, found in Lysinibacillus sphaericus (strain C3-41).